A 305-amino-acid chain; its full sequence is MAKKGVNKQARTNSKLDQLVTSLERLTVGSMQRKSNRQRPKSRKTSGRVVTAPVSSAALIRYKAPSLNGNSMDSVRLASKSLVIEAVKVGIEYQVSVVPLVPCIQHTWLSGVACYWSKYRWRSCRLVYIPYCSSSFTGYVSMGLSYDYADAIPSDETEMSALKGYTTTSAWAGSEGIKMLSYPTGAVPSGAVVLSLDCASMSKPWYPYISAVAATNLGEKQPELLNQYTPARAFIGTGGGMQGVNGLTAGRVFMVYDIELIEPVSPAMQENLSSTGRSKIDQSISPLTGADFEIVRKVSAISQIQ.

A disordered region spans residues 30-49 (SMQRKSNRQRPKSRKTSGRV). Residues 34–46 (KSNRQRPKSRKTS) show a composition bias toward basic residues.

The protein belongs to the icosahedral plant coat protein family.

The protein resides in the virion. Functionally, capsid protein self-assembles to form an icosahedral capsid about 34 nm in diameter. The capsid encapsulates the genomic RNA (Potential). This is Capsid protein from Poinsettia latent virus (isolate Euphorbia pulcherrima/Germany/Siepen/2005) (PnLV).